A 194-amino-acid polypeptide reads, in one-letter code: ATP-dependent Clp protease proteolytic subunit (194 aa).

Ser98 functions as the Nucleophile in the catalytic mechanism. The active site involves His123.

This sequence belongs to the peptidase S14 family. In terms of assembly, fourteen ClpP subunits assemble into 2 heptameric rings which stack back to back to give a disk-like structure with a central cavity, resembling the structure of eukaryotic proteasomes.

Its subcellular location is the cytoplasm. It catalyses the reaction Hydrolysis of proteins to small peptides in the presence of ATP and magnesium. alpha-casein is the usual test substrate. In the absence of ATP, only oligopeptides shorter than five residues are hydrolyzed (such as succinyl-Leu-Tyr-|-NHMec, and Leu-Tyr-Leu-|-Tyr-Trp, in which cleavage of the -Tyr-|-Leu- and -Tyr-|-Trp bonds also occurs).. Functionally, cleaves peptides in various proteins in a process that requires ATP hydrolysis. Has a chymotrypsin-like activity. Plays a major role in the degradation of misfolded proteins. The protein is ATP-dependent Clp protease proteolytic subunit of Alkaliphilus metalliredigens (strain QYMF).